Reading from the N-terminus, the 493-residue chain is Probable cytosol aminopeptidase (493 aa).

Mn(2+) is bound by residues Lys-262 and Asp-267. The active site involves Lys-274. Positions 285, 344, and 346 each coordinate Mn(2+). Residue Arg-348 is part of the active site.

This sequence belongs to the peptidase M17 family. Mn(2+) is required as a cofactor.

Its subcellular location is the cytoplasm. It catalyses the reaction Release of an N-terminal amino acid, Xaa-|-Yaa-, in which Xaa is preferably Leu, but may be other amino acids including Pro although not Arg or Lys, and Yaa may be Pro. Amino acid amides and methyl esters are also readily hydrolyzed, but rates on arylamides are exceedingly low.. The catalysed reaction is Release of an N-terminal amino acid, preferentially leucine, but not glutamic or aspartic acids.. Presumably involved in the processing and regular turnover of intracellular proteins. Catalyzes the removal of unsubstituted N-terminal amino acids from various peptides. In Xanthomonas campestris pv. campestris (strain 8004), this protein is Probable cytosol aminopeptidase.